The sequence spans 208 residues: Thymidylate kinase (208 aa).

10–17 (GPDGSGKT) is an ATP binding site.

This sequence belongs to the thymidylate kinase family.

The enzyme catalyses dTMP + ATP = dTDP + ADP. Phosphorylation of dTMP to form dTDP in both de novo and salvage pathways of dTTP synthesis. The protein is Thymidylate kinase of Listeria welshimeri serovar 6b (strain ATCC 35897 / DSM 20650 / CCUG 15529 / CIP 8149 / NCTC 11857 / SLCC 5334 / V8).